A 344-amino-acid chain; its full sequence is Biotin synthase (344 aa).

In terms of domain architecture, Radical SAM core spans 65 to 290 (PEVEVEGIIS…RTMLRFAGGR (226 aa)). 3 residues coordinate [4Fe-4S] cluster: cysteine 80, cysteine 84, and cysteine 87. Residues cysteine 123, cysteine 156, cysteine 215, and arginine 285 each coordinate [2Fe-2S] cluster.

Belongs to the radical SAM superfamily. Biotin synthase family. Homodimer. [4Fe-4S] cluster is required as a cofactor. The cofactor is [2Fe-2S] cluster.

The enzyme catalyses (4R,5S)-dethiobiotin + (sulfur carrier)-SH + 2 reduced [2Fe-2S]-[ferredoxin] + 2 S-adenosyl-L-methionine = (sulfur carrier)-H + biotin + 2 5'-deoxyadenosine + 2 L-methionine + 2 oxidized [2Fe-2S]-[ferredoxin]. The protein operates within cofactor biosynthesis; biotin biosynthesis; biotin from 7,8-diaminononanoate: step 2/2. Functionally, catalyzes the conversion of dethiobiotin (DTB) to biotin by the insertion of a sulfur atom into dethiobiotin via a radical-based mechanism. The sequence is that of Biotin synthase from Mycolicibacterium paratuberculosis (strain ATCC BAA-968 / K-10) (Mycobacterium paratuberculosis).